The primary structure comprises 1516 residues: MDSPPKLTGETLIVHHIPLVHCQVPDRQCCGGAGGGGGSTRPNPFCPPELGITQPDQDLGQADSLLFSSLHSTPGGTARSIDSTKSRSRDGRGPGAPKRHNPFLLQEGVGEPGLGDLYDDSIGDSATQQSFHLHGTGQPNFHLSSFQLPPSGPRVGRPWGTTRSRAGVVEGQEQEPVMTLDTQQCGTSHCCRPELEAETMELDECGGPGGSGSGGGASDTSGFSFDQEWKLSSDESPRNPGCSGSGDQHCRCSSTSSQSEAADQSMGYVSDSSCNSSDGVLVTFSTLYNKMHGTPRANLNSAPQSCSDSSFCSHSDPGAFYLDLQPSPFESKMSYESHHPESGGREGGYGCPHASSPELDANCNSYRPHCEPCPAVADLTACFQSQARLVVATQNYYKLVTCDLSSQSSPSPAGSSITSCSEEHTKISPPPGPGPDPGPSQPSEYYLFQKPEVQPEEQEAVSSSTQAAAAVGPTVLEGQVYTNTSPPNLSTGRQRSRSYDRSLQRSPPVRLGSLERMLSCPVRLSEGPAAMAGPGSPPRRVTSFAELAKGRKKTGGSGSPPLRVSVGDSSQEFSPIQEAQQDRGAPLDEGTCCSHSLPPMPLGPGMDLLGPDPSPPWSTQVCQGPHSSEMPPAGLRATGQGPLAQLMDPGPALPGSPANSHTQRDARARADGGGTESRPVLRYSKEQRPTTLPIQPFVFQHHFPKQLAKARALHSLSQLYSLSGCSRTQQPAPLAAPAAQVSVPAPSGEPQASTPRATGRGARKAGSEPETSRPSPLGSYSPIRSVGPFGPSTDSSASTSCSPPPEQPTATESLPPWSHSCPSAVRPATSQQPQKEDQKILTLTEYRLHGTGSLPPLGSWRSGLSRAESLARGGGEGSMATRPSNANHLSPQALKWREYRRKNPLGPPGLSGSLDRRSQEARLARRNPIFEFPGSLSAASHLNCRLNGQAVKPLPLTCPDFQDPFSLTEKPPAEFCLSPDGSSEAISIDLLQKKGLVKAVNIAVDLIVAHFGTSRDPGVKAKLGNSSVSPNVGHLVLKYLCPAVRAVLEDGLKAFVLDVIIGQRKNMPWSVVEASTQLGPSTKVLHGLYNKVSQFPELTSHTMRFNAFILGLLNIRSLEFWFNHLYNHEDIIQTHYQPWGFLSAAHTVCPGLFEELLLLLQPLALLPFSLDLLFQHRLLQSGQQQRQHKELLRVSQDLLLSAHSTLQLARARGQEGPGDVDRAAQGERVKGVGASEGGEEEEEEEETEEVAEAAGGSGRARWARGGQAGWWYQLMQSSQVYIDGSIEGSRFPRGSSNSSSEKKKGAGGGGPPQAPPPREGVVEGAEACPASEEALGRERGWPFWMGSPPDSVLAELRRSREREGPAASPAENEEGASEPSPGGIKWGHLFGSRKAQREARPTNRLPSDWLSLDKSMFQLVAQTVGSRREPEPKESLQEPHSPALPSSPPCEVQALCHHLATGPGQLSFHKGDILRVLGRAGGDWLRCSRGPDSGLVPLAYVTLTPTPSPTPGSSQN.

6 disordered regions span residues 33 to 105 (AGGG…PFLL), 202 to 224 (LDEC…SGFS), 229 to 248 (WKLS…SGDQ), 331 to 351 (SKMS…GYGC), 404 to 445 (LSSQ…PSEY), and 478 to 511 (GQVY…PVRL). The span at 66–81 (LFSSLHSTPGGTARSI) shows a compositional bias: polar residues. The segment covering 82 to 92 (DSTKSRSRDGR) has biased composition (basic and acidic residues). Over residues 206 to 217 (GGPGGSGSGGGA) the composition is skewed to gly residues. The segment covering 333 to 344 (MSYESHHPESGG) has biased composition (basic and acidic residues). Positions 405–420 (SSQSSPSPAGSSITSC) are enriched in low complexity. Residues 428–440 (SPPPGPGPDPGPS) are compositionally biased toward pro residues. The span at 480 to 493 (VYTNTSPPNLSTGR) shows a compositional bias: polar residues. 3 positions are modified to phosphoserine: S536, S543, and S559. Disordered regions lie at residues 550–588 (GRKK…APLD), 646–688 (LMDP…KEQR), 727–836 (RTQQ…PQKE), and 868–889 (ESLA…ANHL). Positions 567 to 579 (GDSSQEFSPIQEA) are enriched in polar residues. S656 is modified (phosphoserine). The span at 729–746 (QQPAPLAAPAAQVSVPAP) shows a compositional bias: low complexity. S781 carries the phosphoserine modification. The segment covering 791–801 (PSTDSSASTSC) has biased composition (low complexity). One can recognise an RUN domain in the interval 1031–1175 (NVGHLVLKYL…LPFSLDLLFQ (145 aa)). Disordered stretches follow at residues 1210–1261 (RARG…GRAR), 1286–1408 (IEGS…LPSD), and 1422–1449 (QTVG…SSPP). Basic and acidic residues predominate over residues 1219–1230 (DVDRAAQGERVK). The span at 1237-1251 (GGEEEEEEEETEEVA) shows a compositional bias: acidic residues. The span at 1355–1364 (ELRRSREREG) shows a compositional bias: basic and acidic residues. Phosphoserine occurs at positions 1368 and 1380. A compositionally biased stretch (basic and acidic residues) spans 1426–1437 (SRREPEPKESLQ). The region spanning 1447–1506 (SPPCEVQALCHHLATGPGQLSFHKGDILRVLGRAGGDWLRCSRGPDSGLVPLAYVTLTPT) is the SH3 domain.

As to quaternary structure, associated component of the adapter-like complex 4 (AP-4). Interacts with active RAB1A and RAB1B, and with GOLGA2. Interacts (via RUN domain) with RAB35 (GTP-bound form); the interaction recruits RUSC2 to the plasma membrane. Widely expressed, with highest levels in brain and testis.

The protein localises to the cytoplasm. It localises to the cytosol. Its subcellular location is the cell membrane. Its function is as follows. Associates with the adapter-like complex 4 (AP-4) and may therefore play a role in vesicular trafficking of proteins at the trans-Golgi network. In Homo sapiens (Human), this protein is AP-4 complex accessory subunit RUSC2.